The primary structure comprises 275 residues: MSDLQHIIDDAFERRDSITPNSVDPIVREAVLQTIDMLDAGQIRVAEKIAGEWVVHQWVKKAVLLYFRINDNAVLQGAGTQYYDKVPLKFADYTPERFKQESIRVVPPATVRKGSFIARNAVLLPSYVNIGAYVGEGSMVDTWATVGSCAQIGANVHLSGGVGIGGVLEPLQAGPTIIEDNCFIGARSEVVEGVIVGEGSVISMGVFIGQSTRIYDRETGEIHYGRVPPGSVVVSGSLPSKCGKYSLYAAVIVKKVDAKTRSKVGINALLRSIDD.

Substrate contacts are provided by R104 and D141.

Belongs to the transferase hexapeptide repeat family. As to quaternary structure, homotrimer.

It is found in the cytoplasm. It catalyses the reaction (S)-2,3,4,5-tetrahydrodipicolinate + succinyl-CoA + H2O = (S)-2-succinylamino-6-oxoheptanedioate + CoA. The protein operates within amino-acid biosynthesis; L-lysine biosynthesis via DAP pathway; LL-2,6-diaminopimelate from (S)-tetrahydrodipicolinate (succinylase route): step 1/3. The protein is 2,3,4,5-tetrahydropyridine-2,6-dicarboxylate N-succinyltransferase of Tolumonas auensis (strain DSM 9187 / NBRC 110442 / TA 4).